A 435-amino-acid chain; its full sequence is Tubulin-like protein TubZ (435 aa).

GTP is bound by residues 25-26, 124-126, Asn185, and Asn209; these read MG and GTG. The interval 403–435 is disordered; sequence QEEKPKKKKLNFGAEPEAEVADDSQPTKKKLSF.

The protein belongs to the FtsZ family. TubZ subfamily. Polymerizes to form two-stranded filaments and bundles at higher concentration in the presence of GTP. Binds to the TubR-tubC protein DNA complex.

The protein localises to the cytoplasm. The catalysed reaction is GTP + H2O = GDP + phosphate + H(+). With respect to regulation, GTPase inhibited by GTP-gamma-S, which also stabilizes filaments. Its function is as follows. A tubulin-like, filament forming GTPase; the motor component of the type III plasmid partition system which ensures correct segregation of the pXO1 plasmid. Essential for plasmid replication. The filaments seed from a DNA centromere-like site (tubC)-TubR complex which extends to surround the TubZ filaments. Highly dynamic filaments grow at the plus end and depolymerize at the minus end, a process called treadmilling. TubR-tubC complexes track the depolymerizing minus end of the filament, probably pulling plasmid within the cell. Has a high GTPase activity; in the presence of GTP assembles into dynamic filaments which bind almost exclusively GDP. Filament formation is cooperative, requiring a critical concentration. Formation occurs very quickly and is followed by disassembly as GTP is consumed. Small amounts of GTP-gamma-S stabilize filaments. Has high GTP and dGTPase activity, 6-fold lower ATPase activity. Forms filaments in the presence of ATP that also disassemble. Weakly binds DNA in a GTP-dependent, non-sequence-specific manner; GTP hydrolysis is not required for DNA-binding. The chain is Tubulin-like protein TubZ from Bacillus anthracis.